A 776-amino-acid chain; its full sequence is MASLIYRQLLTNSYTVELSDEIQEIGSTKSQSVTINPGPFAQTSYAPVNWGPGETNDSTVVEPVLDGPYQPTTFNPPVSYWMLLTPTDAGVEVEGTNNTNRWLATILIEPNVQSEERTYTLFGQQVQITVSNDSQTKWKLVDVSKQTQDGNFSQHRQLLSTPKLYGVMKHGGKIYTYNGETPNANTGYYSTTNYDSVNMTAYCDFYIIPLAQEAKCTEYINNGLPPIQNTRNVVPVSISSRSIVHTRAKANEDIIVSKTSLWKEMQYNRDIIIRFKFANSIVKSGGLGYKWSEVSFKPANYQYTYTRDGEEVTAHTTCSVNGVNDFNYNGGSLPTDFVISKYEVIKENSCVYIDYWDDSKAFRNMVYVRSLAANLNSVMCPGGDYSFALPVGNYPVMTGGAVSLHSAGVTLSTQFTDFVSLNSLRFRFRLSVEEPSFSIMRTRVSGLYGLPAAKPNNSQEYYEIAGRFSLISLVPSNDDYQTPIMNSVTVRQDLERQLGELRDEFNNLSQQIAMSQLIDLALLPLDMFSMFSGIKSTIDAAKSMATNVMKKFKKSNLANSVSTLTDSLSDAASSVSRSSSVRSLGSTASAWTEVSEVATEVNELTNSISTQTSTISKRLRLKEMATQTDGMNFDDISAAVLKTKIDKSTQINANTLPDIVTEASEKFIPNRTYRVIADDEVLEASTDGRFFAYKVETFEEVPFDVQKFADLVTDSPVISAIIDFKTLKNLNDNYGINKQQALNLLRSDPKVLREFINQNNPIIRNRIENLIMQCRL.

The interval 65–224 is spike head; the sequence is LDGPYQPTTF…KCTEYINNGL (160 aa). Cys-203 and Cys-216 are disulfide-bonded. The segment at 248–479 is spike body and stalk (antigen domain); sequence AKANEDIIVS…LISLVPSNDD (232 aa). The short motif at 308 to 310 is the DGE motif; interaction with ITGA2/ITGB1 heterodimer element; sequence DGE. The cysteines at positions 318 and 380 are disulfide-linked. A hydrophobic; possible role in virus entry into host cell region spans residues 389–409; the sequence is LPVGNYPVMTGGAVSLHSAGV. Positions 448–450 match the YGL motif; interaction with ITGA4 motif; the sequence is YGL. Positions 484–518 form a coiled coil; sequence IMNSVTVRQDLERQLGELRDEFNNLSQQIAMSQLI. A spike foot region spans residues 510–776; the sequence is QQIAMSQLID…IENLIMQCRL (267 aa). A KID motif; interaction with HSPA8 motif is present at residues 644–646; the sequence is KID.

Belongs to the rotavirus VP4 family. In terms of assembly, homotrimer. VP4 adopts a dimeric appearance above the capsid surface, while forming a trimeric base anchored inside the capsid layer. Only hints of the third molecule are observed above the capsid surface. It probably performs a series of molecular rearrangements during viral entry. Prior to trypsin cleavage, it is flexible. The priming trypsin cleavage triggers its rearrangement into rigid spikes with approximate two-fold symmetry of their protruding parts. After an unknown second triggering event, cleaved VP4 may undergo another rearrangement, in which two VP5* subunits fold back on themselves and join a third subunit to form a tightly associated trimer, shaped like a folded umbrella. Interacts with VP6. Interacts with VP7. Homotrimer. The trimer is coiled-coil stabilized by its C-terminus, however, its N-terminus, known as antigen domain or 'body', seems to be flexible allowing it to self-associate either as a dimer or a trimer. In terms of processing, proteolytic cleavage by trypsin results in activation of VP4 functions and greatly increases infectivity. The penetration into the host cell is dependent on trypsin treatment of VP4. It produces two peptides, VP5* and VP8* that remain associated with the virion. Cleavage of VP4 by trypsin probably occurs in vivo in the lumen of the intestine prior to infection of enterocytes. Trypsin seems to be incorporated into the three-layered viral particles but remains inactive as long as the viral outer capsid is intact and would only be activated upon the solubilization of the latter.

It is found in the virion. It localises to the host rough endoplasmic reticulum. The protein localises to the host cell membrane. The protein resides in the host cytoplasm. Its subcellular location is the host cytoskeleton. It is found in the host endoplasmic reticulum-Golgi intermediate compartment. In terms of biological role, spike-forming protein that mediates virion attachment to the host epithelial cell receptors and plays a major role in cell penetration, determination of host range restriction and virulence. Rotavirus attachment and entry into the host cell probably involves multiple sequential contacts between the outer capsid proteins VP4 and VP7, and the cell receptors. It is subsequently lost, together with VP7, following virus entry into the host cell. Following entry into the host cell, low intracellular or intravesicular Ca(2+) concentration probably causes the calcium-stabilized VP7 trimers to dissociate from the virion. This step is probably necessary for the membrane-disrupting entry step and the release of VP4, which is locked onto the virion by VP7. During the virus exit from the host cell, VP4 seems to be required to target the newly formed virions to the host cell lipid rafts. Its function is as follows. Forms the spike 'foot' and 'body' and acts as a membrane permeabilization protein that mediates release of viral particles from endosomal compartments into the cytoplasm. During entry, the part of VP5* that protrudes from the virus folds back on itself and reorganizes from a local dimer to a trimer. This reorganization may be linked to membrane penetration by exposing VP5* hydrophobic region. In integrin-dependent strains, VP5* targets the integrin heterodimer ITGA2/ITGB1 for cell attachment. Functionally, forms the head of the spikes and mediates the recognition of specific host cell surface glycans. It is the viral hemagglutinin and an important target of neutralizing antibodies. In sialic acid-dependent strains, VP8* binds to host cell sialic acid, most probably a ganglioside, providing the initial contact. In some other strains, VP8* mediates the attachment to histo-blood group antigens (HBGAs) for viral entry. This Rotavirus A (isolate RVA/Cow/Thailand/A5/1988/G8P6[1]) (RV-A) protein is Outer capsid protein VP4.